A 395-amino-acid chain; its full sequence is Nucleoside diphosphate kinase homolog 7 (395 aa).

The DM10 domain occupies 22–110 (QSERFAFIAE…YTARQLGSRK (89 aa)).

It belongs to the NDK family. As to quaternary structure, component of sperm flagellar doublet microtubules. Component of the gamma-tubulin ring complex. In terms of tissue distribution, widely expressed. Expressed in the flagellum of epididymal sperm but not in testicular sperm (at protein level).

It is found in the cytoplasm. The protein resides in the cytoskeleton. Its subcellular location is the microtubule organizing center. It localises to the centrosome. The protein localises to the nucleus. It is found in the spindle. The protein resides in the cilium axoneme. Its subcellular location is the flagellum axoneme. It localises to the cell projection. The protein localises to the cilium. Functionally, possesses an intrinsic kinase activity. Displays 3'-5' exonuclease activity with a preference for single-stranded DNA. Does not seem to have nucleoside diphosphate kinase activity. Functional component of the gamma-tubulin ring complex, implicated in the regulation of the microtubule-nucleating activity of the gamma-tubulin ring complex in centrosomes, in a kinase activity-dependent manner. Part of the dynein-decorated doublet microtubules (DMTs) in cilia axoneme, which is required for motile cilia beating. This Rattus norvegicus (Rat) protein is Nucleoside diphosphate kinase homolog 7 (Nme7).